Reading from the N-terminus, the 225-residue chain is Ribonuclease 3 (225 aa).

The region spanning V5–D127 is the RNase III domain. E40 provides a ligand contact to Mg(2+). D44 is a catalytic residue. 2 residues coordinate Mg(2+): D113 and E116. Residue E116 is part of the active site. Positions D154–N223 constitute a DRBM domain.

It belongs to the ribonuclease III family. As to quaternary structure, homodimer. It depends on Mg(2+) as a cofactor.

The protein resides in the cytoplasm. The catalysed reaction is Endonucleolytic cleavage to 5'-phosphomonoester.. Digests double-stranded RNA. Involved in the processing of primary rRNA transcript to yield the immediate precursors to the large and small rRNAs (23S and 16S). Processes some mRNAs, and tRNAs when they are encoded in the rRNA operon. Processes pre-crRNA and tracrRNA of type II CRISPR loci if present in the organism. The polypeptide is Ribonuclease 3 (Pseudoalteromonas translucida (strain TAC 125)).